Here is a 1142-residue protein sequence, read N- to C-terminus: Enamelin (1142 aa).

Residues 1 to 38 form the signal peptide; it reads MLLSCRHGASSPKLDNLVPSGKMKILLVFLGLLCYSAA. S53 carries the post-translational modification Phosphoserine. Disordered regions lie at residues 90 to 347, 374 to 513, 543 to 587, and 603 to 662; these read YQMP…FYRN, YRRV…IIPK, TEGI…LSHG, and RENS…FPGQ. Pro residues predominate over residues 128–148; sequence QPQPKTPTPKQPLNEPSPTPT. A phosphoserine mark is found at S191 and S216. A compositionally biased stretch (basic and acidic residues) spans 223 to 234; it reads DFEKPKEKDPPK. 2 stretches are compositionally biased toward polar residues: residues 243-303 and 381-395; these read SVNT…SQSP and TARS…NSAN. N-linked (GlcNAc...) asparagine glycosylation is found at N245, N252, N264, and N291. The propeptide occupies 277 to 514; it reads NPRSNPTGQN…QTQTQIIPKG (238 aa). Basic and acidic residues predominate over residues 431-442; that stretch reads PREKQVSQKERT. Over residues 453–467 the composition is skewed to polar residues; the sequence is WRNSQDYGINKSNYK. N462 carries N-linked (GlcNAc...) asparagine glycosylation. Residue P547 is modified to Hydroxyproline. Residues 570 to 582 show a composition bias toward basic and acidic residues; the sequence is FKEDPGRQEEHLP. The propeptide occupies 666–669; the sequence is DMEE. Residues 787-816 show a composition bias toward polar residues; it reads NLYKTPTSSPHQKENQPYSNNSPAGLQKNP. 3 disordered regions span residues 787–820, 921–965, and 1020–1049; these read NLYK…TWHE, TSIV…SQLS, and VFGT…QQRQ. Residue N929 is glycosylated (N-linked (GlcNAc...) asparagine). Residues 952–965 are compositionally biased toward polar residues; sequence LRRSTPCSVKSQLS. N-linked (GlcNAc...) asparagine glycosylation is present at N1040.

Post-translationally, proteolytically cleaved into several smaller polypeptides. Cleavage of N-terminal region of enamelin occurs soon after secretion. Phosphorylated by FAM20C in vitro. In terms of tissue distribution, expressed by secretory-phase ameloblasts. Intact enamelin and large-molecular-weight enamelins are limited to the most superficial layer of the developing enamel matrix, while low-molecular-weight enamelins are observed in deeper enamelin. Preferential localization among the crystallites in rod and interrod enamel.

The protein localises to the secreted. It is found in the extracellular space. It localises to the extracellular matrix. Its function is as follows. Involved in the mineralization and structural organization of enamel. Involved in the extension of enamel during the secretory stage of dental enamel formation. The chain is Enamelin (ENAM) from Sus scrofa (Pig).